The following is a 475-amino-acid chain: UDP-N-acetylmuramate--L-alanine ligase (475 aa).

114-120 is a binding site for ATP; the sequence is GTHGKTT.

This sequence belongs to the MurCDEF family.

It localises to the cytoplasm. The catalysed reaction is UDP-N-acetyl-alpha-D-muramate + L-alanine + ATP = UDP-N-acetyl-alpha-D-muramoyl-L-alanine + ADP + phosphate + H(+). It participates in cell wall biogenesis; peptidoglycan biosynthesis. In terms of biological role, cell wall formation. In Bartonella quintana (strain Toulouse) (Rochalimaea quintana), this protein is UDP-N-acetylmuramate--L-alanine ligase.